A 75-amino-acid chain; its full sequence is Tautomerase PptA (75 aa).

Pro2 serves as the catalytic Proton acceptor; via imino nitrogen.

Belongs to the 4-oxalocrotonate tautomerase family. PptA subfamily. In terms of assembly, homodimer.

It is found in the cytoplasm. In Shigella sonnei (strain Ss046), this protein is Tautomerase PptA.